Here is a 340-residue protein sequence, read N- to C-terminus: Glycerol-3-phosphate dehydrogenase [NAD(P)+] (340 aa).

The NADPH site is built by Ser-11, Trp-12, Arg-33, and Lys-106. Residues Lys-106, Gly-137, and Ser-139 each contribute to the sn-glycerol 3-phosphate site. Ala-141 lines the NADPH pocket. Residues Lys-192, Asp-245, Ser-255, Arg-256, and Asn-257 each coordinate sn-glycerol 3-phosphate. The active-site Proton acceptor is Lys-192. Residue Arg-256 coordinates NADPH. The NADPH site is built by Val-280 and Glu-282.

This sequence belongs to the NAD-dependent glycerol-3-phosphate dehydrogenase family.

Its subcellular location is the cytoplasm. It carries out the reaction sn-glycerol 3-phosphate + NAD(+) = dihydroxyacetone phosphate + NADH + H(+). It catalyses the reaction sn-glycerol 3-phosphate + NADP(+) = dihydroxyacetone phosphate + NADPH + H(+). Its pathway is membrane lipid metabolism; glycerophospholipid metabolism. Its function is as follows. Catalyzes the reduction of the glycolytic intermediate dihydroxyacetone phosphate (DHAP) to sn-glycerol 3-phosphate (G3P), the key precursor for phospholipid synthesis. This chain is Glycerol-3-phosphate dehydrogenase [NAD(P)+], found in Bacillus cereus (strain G9842).